The chain runs to 118 residues: MARIAGVNIPDNKHTVISLTYIYGVGRTTAQKICAVTGVNPAAKIKDLSDEQIEQLRGEVAKFTTEGDLRREINMKIKRLMDLGCYRGLRHRRGLPVRGQRTKTNARTRKGPRKPIRK.

A disordered region spans residues 93–118; sequence RGLPVRGQRTKTNARTRKGPRKPIRK.

The protein belongs to the universal ribosomal protein uS13 family. As to quaternary structure, part of the 30S ribosomal subunit. Forms a loose heterodimer with protein S19. Forms two bridges to the 50S subunit in the 70S ribosome.

Functionally, located at the top of the head of the 30S subunit, it contacts several helices of the 16S rRNA. In the 70S ribosome it contacts the 23S rRNA (bridge B1a) and protein L5 of the 50S subunit (bridge B1b), connecting the 2 subunits; these bridges are implicated in subunit movement. Contacts the tRNAs in the A and P-sites. The chain is Small ribosomal subunit protein uS13 from Pseudomonas fluorescens (strain ATCC BAA-477 / NRRL B-23932 / Pf-5).